Reading from the N-terminus, the 110-residue chain is Histone H2A.1 (110 aa).

Belongs to the histone H2A family. In terms of assembly, the nucleosome is a histone octamer containing two molecules each of H2A, H2B, H3 and H4 assembled in one H3-H4 heterotetramer and two H2A-H2B heterodimers. The octamer wraps approximately 147 bp of DNA. As to expression, expressed in the generative cell within the bicellular pollen. Not detected in other reproductive or vegetative tissues.

The protein localises to the nucleus. It is found in the chromosome. In terms of biological role, core component of nucleosome. Nucleosomes wrap and compact DNA into chromatin, limiting DNA accessibility to the cellular machineries which require DNA as a template. Histones thereby play a central role in transcription regulation, DNA repair, DNA replication and chromosomal stability. DNA accessibility is regulated via a complex set of post-translational modifications of histones, also called histone code, and nucleosome remodeling. This Lilium longiflorum (Trumpet lily) protein is Histone H2A.1 (gcH2A).